We begin with the raw amino-acid sequence, 688 residues long: UvrABC system protein B (688 aa).

Residues 31–188 (GRVNAGEPDV…RKFVSMQYQR (158 aa)) form the Helicase ATP-binding domain. 44 to 51 (GATGTGKS) contacts ATP. The Beta-hairpin signature appears at 97–120 (YYDYYQPEAYVPQTDTFIEKDSSV). The region spanning 434-587 (QIDDLLEQIR…QVAYNTEHGI (154 aa)) is the Helicase C-terminal domain. A disordered region spans residues 607 to 632 (GEDTKKMLEGRGGGKRSPTPNLRREG). The UVR domain occupies 642–677 (ETIISDLNDQMLQAAGELKFELAARLRDELGDLKRE).

Belongs to the UvrB family. In terms of assembly, forms a heterotetramer with UvrA during the search for lesions. Interacts with UvrC in an incision complex.

Its subcellular location is the cytoplasm. In terms of biological role, the UvrABC repair system catalyzes the recognition and processing of DNA lesions. A damage recognition complex composed of 2 UvrA and 2 UvrB subunits scans DNA for abnormalities. Upon binding of the UvrA(2)B(2) complex to a putative damaged site, the DNA wraps around one UvrB monomer. DNA wrap is dependent on ATP binding by UvrB and probably causes local melting of the DNA helix, facilitating insertion of UvrB beta-hairpin between the DNA strands. Then UvrB probes one DNA strand for the presence of a lesion. If a lesion is found the UvrA subunits dissociate and the UvrB-DNA preincision complex is formed. This complex is subsequently bound by UvrC and the second UvrB is released. If no lesion is found, the DNA wraps around the other UvrB subunit that will check the other stand for damage. The chain is UvrABC system protein B from Clavibacter sepedonicus (Clavibacter michiganensis subsp. sepedonicus).